Reading from the N-terminus, the 356-residue chain is Tyrosine recombinase XerS (356 aa).

A Core-binding (CB) domain is found at 16–121 (TMPWYILEYY…ALSSLYKYLT (106 aa)). One can recognise a Tyr recombinase domain in the interval 169–354 (EFLQYIDREY…VNDEQKNALN (186 aa)). Active-site residues include R210, K234, H306, R309, and H332. Catalysis depends on Y341, which acts as the O-(3'-phospho-DNA)-tyrosine intermediate.

The protein belongs to the 'phage' integrase family. XerS subfamily.

It localises to the cytoplasm. FtsK is required for recombination. Site-specific tyrosine recombinase, which acts by catalyzing the cutting and rejoining of the recombining DNA molecules. Essential to convert dimers of the bacterial chromosome into monomers to permit their segregation at cell division. This is Tyrosine recombinase XerS from Streptococcus gordonii (strain Challis / ATCC 35105 / BCRC 15272 / CH1 / DL1 / V288).